We begin with the raw amino-acid sequence, 118 residues long: UPF0102 protein CMM_1377 (118 aa).

The protein belongs to the UPF0102 family.

The chain is UPF0102 protein CMM_1377 from Clavibacter michiganensis subsp. michiganensis (strain NCPPB 382).